The following is a 196-amino-acid chain: GTP cyclohydrolase-2 (196 aa).

49-53 (RVHSE) contacts GTP. Zn(2+)-binding residues include Cys54, Cys65, and Cys67. Residues Gln70, 92 to 94 (EGR), and Thr114 contribute to the GTP site. Asp126 serves as the catalytic Proton acceptor. The Nucleophile role is filled by Arg128. GTP contacts are provided by Thr149 and Lys154.

This sequence belongs to the GTP cyclohydrolase II family. Homodimer. Zn(2+) serves as cofactor.

The catalysed reaction is GTP + 4 H2O = 2,5-diamino-6-hydroxy-4-(5-phosphoribosylamino)-pyrimidine + formate + 2 phosphate + 3 H(+). It participates in cofactor biosynthesis; riboflavin biosynthesis; 5-amino-6-(D-ribitylamino)uracil from GTP: step 1/4. Catalyzes the conversion of GTP to 2,5-diamino-6-ribosylamino-4(3H)-pyrimidinone 5'-phosphate (DARP), formate and pyrophosphate. This is GTP cyclohydrolase-2 from Salmonella choleraesuis (strain SC-B67).